A 207-amino-acid chain; its full sequence is Large ribosomal subunit protein uL4 (207 aa).

Residues 55–76 (ALVSGGGKKPWRQKGTGRARHG) form a disordered region. The span at 63-76 (KPWRQKGTGRARHG) shows a compositional bias: basic residues.

Belongs to the universal ribosomal protein uL4 family. Part of the 50S ribosomal subunit.

In terms of biological role, one of the primary rRNA binding proteins, this protein initially binds near the 5'-end of the 23S rRNA. It is important during the early stages of 50S assembly. It makes multiple contacts with different domains of the 23S rRNA in the assembled 50S subunit and ribosome. Functionally, forms part of the polypeptide exit tunnel. In Phytoplasma mali (strain AT), this protein is Large ribosomal subunit protein uL4.